Here is a 143-residue protein sequence, read N- to C-terminus: Transmembrane protein 80 (143 aa).

A run of 4 helical transmembrane segments spans residues 21 to 41, 55 to 75, 99 to 119, and 121 to 141; these read MLFY…LLMI, LVLD…RLYL, ALLS…DWAL, and ATLL…IAAF.

It is found in the membrane. The protein localises to the cell projection. The protein resides in the cilium. The sequence is that of Transmembrane protein 80 from Homo sapiens (Human).